The sequence spans 309 residues: MILTVTMNPSIDISYPLEELKIDTVNRVSEVSKTAGGKGLNVTRVLAEIGDNVAATGLIGGTNGEFLLQNLNQAVRPLFYNISGDTRNCIAILHESKQTEILEAGPTITVDEANGFLHHFKSLMESAEVVSISGSLPAGLPVEYYIQLVEIANQAGNKVVLDCSGAALEAVLKSDVKPTAIKPNNEELSQLLGREVSKDLDELKAVLSEPLFDGIEWIIVSLGADGAFAKHWETFYKVDIPKIQVVNPVGSGDSTVAGISSALSHQADDVSLLKKANVLGMLNAQEKMTGHVNVENYDDLYNQITVKEV.

It belongs to the carbohydrate kinase PfkB family. LacC subfamily.

It catalyses the reaction D-tagatofuranose 6-phosphate + ATP = D-tagatofuranose 1,6-bisphosphate + ADP + H(+). Its pathway is carbohydrate metabolism; D-tagatose 6-phosphate degradation; D-glyceraldehyde 3-phosphate and glycerone phosphate from D-tagatose 6-phosphate: step 1/2. The sequence is that of Tagatose-6-phosphate kinase from Streptococcus sanguinis (strain SK36).